The following is a 418-amino-acid chain: Gamma-glutamyl phosphate reductase (418 aa).

It belongs to the gamma-glutamyl phosphate reductase family.

The protein localises to the cytoplasm. The enzyme catalyses L-glutamate 5-semialdehyde + phosphate + NADP(+) = L-glutamyl 5-phosphate + NADPH + H(+). Its pathway is amino-acid biosynthesis; L-proline biosynthesis; L-glutamate 5-semialdehyde from L-glutamate: step 2/2. In terms of biological role, catalyzes the NADPH-dependent reduction of L-glutamate 5-phosphate into L-glutamate 5-semialdehyde and phosphate. The product spontaneously undergoes cyclization to form 1-pyrroline-5-carboxylate. The chain is Gamma-glutamyl phosphate reductase from Geotalea uraniireducens (strain Rf4) (Geobacter uraniireducens).